Consider the following 99-residue polypeptide: Acylphosphatase (99 aa).

Residues I5–S97 form the Acylphosphatase-like domain. Residues R20 and N38 contribute to the active site.

It belongs to the acylphosphatase family.

The catalysed reaction is an acyl phosphate + H2O = a carboxylate + phosphate + H(+). The protein is Acylphosphatase (acyP) of Rhodopseudomonas palustris (strain ATCC BAA-98 / CGA009).